The sequence spans 455 residues: Probable glycine dehydrogenase (decarboxylating) subunit 1 (455 aa).

This sequence belongs to the GcvP family. N-terminal subunit subfamily. As to quaternary structure, the glycine cleavage system is composed of four proteins: P, T, L and H. In this organism, the P 'protein' is a heterodimer of two subunits.

It carries out the reaction N(6)-[(R)-lipoyl]-L-lysyl-[glycine-cleavage complex H protein] + glycine + H(+) = N(6)-[(R)-S(8)-aminomethyldihydrolipoyl]-L-lysyl-[glycine-cleavage complex H protein] + CO2. Its function is as follows. The glycine cleavage system catalyzes the degradation of glycine. The P protein binds the alpha-amino group of glycine through its pyridoxal phosphate cofactor; CO(2) is released and the remaining methylamine moiety is then transferred to the lipoamide cofactor of the H protein. In Francisella tularensis subsp. mediasiatica (strain FSC147), this protein is Probable glycine dehydrogenase (decarboxylating) subunit 1.